The primary structure comprises 232 residues: Phosphoribosylaminoimidazole-succinocarboxamide synthase (232 aa).

The protein belongs to the SAICAR synthetase family.

It catalyses the reaction 5-amino-1-(5-phospho-D-ribosyl)imidazole-4-carboxylate + L-aspartate + ATP = (2S)-2-[5-amino-1-(5-phospho-beta-D-ribosyl)imidazole-4-carboxamido]succinate + ADP + phosphate + 2 H(+). Its pathway is purine metabolism; IMP biosynthesis via de novo pathway; 5-amino-1-(5-phospho-D-ribosyl)imidazole-4-carboxamide from 5-amino-1-(5-phospho-D-ribosyl)imidazole-4-carboxylate: step 1/2. This Finegoldia magna (strain ATCC 29328 / DSM 20472 / WAL 2508) (Peptostreptococcus magnus) protein is Phosphoribosylaminoimidazole-succinocarboxamide synthase.